The chain runs to 486 residues: Monocarboxylate transporter 12 (486 aa).

Topologically, residues 1–9 (MTKITRVSL) are cytoplasmic. Helical transmembrane passes span 10-30 (ASPPDGGWGWMIVAGCFLVTI), 58-78 (AWIHSIVDCMTMLCAPLGSVV), 86-106 (AGIMLGGLLASTGFILGSFAT), 115-135 (LGVLTGLGFALCYSPAIAMVG), 148-168 (IAMSGSGIGTFILAPVVQLLI), 177-197 (LLILGGFVLNLCVCGALMRPI), 253-273 (FVVLAVSVLFMAYGCSPLFVY), 289-309 (AFLMSILGVIDIVGNITFGWL), 320-340 (YVCYLFAVALDGLCYLCLPML), 353-373 (FGYFDGAYVTLIPVVTAEIVG), 383-403 (VVYFLHAVPYLVSPPIAGWLV), and 410-430 (TAAFLLCGFAMIFSSILLGFV). The Cytoplasmic segment spans residues 431 to 486 (RIVKRMKRTQVPFPVKDSDPKLQLWTNGSVAYSVARELDQKDEEPLPKARSGCNLT).

The protein belongs to the major facilitator superfamily. Monocarboxylate porter (TC 2.A.1.13) family. As to quaternary structure, interacts with isoform 2 of BSG; this interaction is required for its localization to the plasma membrane. In terms of tissue distribution, highly expressed in the lung, liver, kidney, and pancreas. Expressed in eye lens.

It is found in the cell membrane. Its subcellular location is the basolateral cell membrane. It catalyses the reaction creatine(in) = creatine(out). The enzyme catalyses guanidinoacetate(in) = guanidinoacetate(out). With respect to regulation, creatine uptake is inhibited by carbonyl cyanide 3-chlorophenylhydrazone (CCCP) and by valinomycin. Its function is as follows. Functions as a transporter for creatine and as well for its precursor guanidinoacetate. Transport of creatine and GAA is independent of resting membrane potential and extracellular Na(+), Cl(-), or pH. Contributes to the process of creatine biosynthesis and distribution. This is Monocarboxylate transporter 12 from Mus musculus (Mouse).